Consider the following 211-residue polypeptide: Uracil phosphoribosyltransferase (211 aa).

Residues arginine 78, arginine 103, and 130–138 (DPMLATGGT) contribute to the 5-phospho-alpha-D-ribose 1-diphosphate site. Uracil is bound by residues isoleucine 195 and 200 to 202 (GDA). Aspartate 201 contacts 5-phospho-alpha-D-ribose 1-diphosphate.

This sequence belongs to the UPRTase family. The cofactor is Mg(2+).

It catalyses the reaction UMP + diphosphate = 5-phospho-alpha-D-ribose 1-diphosphate + uracil. Its pathway is pyrimidine metabolism; UMP biosynthesis via salvage pathway; UMP from uracil: step 1/1. With respect to regulation, allosterically activated by GTP. Its function is as follows. Catalyzes the conversion of uracil and 5-phospho-alpha-D-ribose 1-diphosphate (PRPP) to UMP and diphosphate. In Pseudarthrobacter chlorophenolicus (strain ATCC 700700 / DSM 12829 / CIP 107037 / JCM 12360 / KCTC 9906 / NCIMB 13794 / A6) (Arthrobacter chlorophenolicus), this protein is Uracil phosphoribosyltransferase.